Here is a 407-residue protein sequence, read N- to C-terminus: MTTATQTDIVIAGAGIGGLTTALALHAQGIERVVVLESANEIRPLGVGINVQPAAIAQLFALGLGEAIAATGIATRELRYLDHAGITLWTEPRGLAAGDPYPQYAIHRGELQMLLLAAVRERLGADTVRTGLRVQDFEHTRTGIRVHAQERGNGGSTVSFEATALVGADGLHSAVRARLHPDRCELLPARIQMWRGLTEVDEFLDGRSMIVANDDRSTRLIAYPCSARHAQHGRALINWVCMVPDVAQDLTREASWDCSGQLKDVLPYFADWKFGWLDVPDLLSRSTQILEYPMVDRDPLPRWGIGRATLLGDAAHLMYPVGANGASQAILDAVSLANELGDNSDTVEALQRYEAVRRPPTTAIVQANRDRDTAERAIATRPDPEKTAALAAITSSYRSIVDRSHVQ.

Residues Gly17, Val134, and Asp313 each coordinate FAD.

FAD is required as a cofactor.

It catalyses the reaction phenazine-1,6-dicarboxylate + NADH + O2 + 2 H(+) = 6-hydroxyphenazine-1-carboxylate + CO2 + NAD(+) + H2O. It carries out the reaction 6-hydroxyphenazine-1-carboxylate + NADH + O2 + 2 H(+) = 1,6-dihydroxyphenazine + CO2 + NAD(+) + H2O. The enzyme catalyses phenazine-1-carboxylate + NADH + O2 + 2 H(+) = 1-hydroxyphenazine + CO2 + NAD(+) + H2O. In terms of biological role, involved in the biosynthesis of phenazine natural products including myxin, an N(5),N(10)-dioxide phenazine antiobiotic, which has antimicrobial activity. Catalyzes the decarboxylative hydroxylations of phenazine 1,6-dicarboxylic acid (PDC) to produce 1,6-dihydroxyphenazine (DHP). Low activity with phenazine 1-carboxylic acid (PCA) to produce 1-hydroxyphenazine. This chain is Phenazine 1,6-dicarboxylic acid hydroxylase PhzS, found in Lysobacter antibioticus.